The chain runs to 110 residues: UPF0122 protein SMU_1061 (110 aa).

The protein belongs to the UPF0122 family.

Functionally, might take part in the signal recognition particle (SRP) pathway. This is inferred from the conservation of its genetic proximity to ftsY/ffh. May be a regulatory protein. The sequence is that of UPF0122 protein SMU_1061 (ylxM) from Streptococcus mutans serotype c (strain ATCC 700610 / UA159).